The sequence spans 444 residues: Chitinase-like protein Idgf4 (444 aa).

Residues 1 to 22 form the signal peptide; sequence MKLLLILLGALLAVLTIKRTSA. Residues 27 to 444 form the GH18 domain; sequence NHLICYYDGT…ILRAIKFKFQ (418 aa). C31 and C58 are oxidised to a cystine. Residue N226 is glycosylated (N-linked (GlcNAc...) asparagine). C345 and C428 are oxidised to a cystine.

It belongs to the glycosyl hydrolase 18 family. IDGF subfamily. In terms of processing, glycosylated.

It localises to the secreted. Cooperates with insulin-like peptides to stimulate the proliferation, polarization and motility of imaginal disk cells. May act by stabilizing the binding of insulin-like peptides to its receptor through a simultaneous interaction with both molecules to form a multiprotein signaling complex. This chain is Chitinase-like protein Idgf4 (Idgf4), found in Glossina morsitans morsitans (Savannah tsetse fly).